The sequence spans 181 residues: Ankyrin repeat-containing protein YGL242C (181 aa).

An N-acetylmethionine modification is found at M1. ANK repeat units lie at residues 49–78 (LGNT…EIEI) and 85–120 (DGDT…DPRV). Residues 151–181 (IDSTNGSGDNNEDGEMIDDGPSDDDEEDDKK) form a disordered region. Residues 160–181 (NNEDGEMIDDGPSDDDEEDDKK) are compositionally biased toward acidic residues. Residue S172 is modified to Phosphoserine.

This chain is Ankyrin repeat-containing protein YGL242C, found in Saccharomyces cerevisiae (strain ATCC 204508 / S288c) (Baker's yeast).